Here is a 93-residue protein sequence, read N- to C-terminus: Small ribosomal subunit protein uS19 (93 aa).

The protein belongs to the universal ribosomal protein uS19 family.

Its function is as follows. Protein S19 forms a complex with S13 that binds strongly to the 16S ribosomal RNA. This Ehrlichia chaffeensis (strain ATCC CRL-10679 / Arkansas) protein is Small ribosomal subunit protein uS19.